We begin with the raw amino-acid sequence, 126 residues long: Small ribosomal subunit protein uS13 (126 aa).

A disordered region spans residues 94-126 (RNLPVHGQRTHTNARTRKGPRRAIAGKKKAGKK).

This sequence belongs to the universal ribosomal protein uS13 family. Part of the 30S ribosomal subunit. Forms a loose heterodimer with protein S19. Forms two bridges to the 50S subunit in the 70S ribosome.

Located at the top of the head of the 30S subunit, it contacts several helices of the 16S rRNA. In the 70S ribosome it contacts the 23S rRNA (bridge B1a) and protein L5 of the 50S subunit (bridge B1b), connecting the 2 subunits; these bridges are implicated in subunit movement. Contacts the tRNAs in the A and P-sites. The chain is Small ribosomal subunit protein uS13 from Parafrankia sp. (strain EAN1pec).